Here is a 310-residue protein sequence, read N- to C-terminus: Carbamate kinase-like protein YqeA (310 aa).

It belongs to the carbamate kinase family.

This chain is Carbamate kinase-like protein YqeA (yqeA), found in Escherichia coli (strain K12).